The sequence spans 170 residues: Adenine phosphoribosyltransferase (170 aa).

It belongs to the purine/pyrimidine phosphoribosyltransferase family. Homodimer.

Its subcellular location is the cytoplasm. It catalyses the reaction AMP + diphosphate = 5-phospho-alpha-D-ribose 1-diphosphate + adenine. Its pathway is purine metabolism; AMP biosynthesis via salvage pathway; AMP from adenine: step 1/1. In terms of biological role, catalyzes a salvage reaction resulting in the formation of AMP, that is energically less costly than de novo synthesis. This is Adenine phosphoribosyltransferase from Cenarchaeum symbiosum (strain A).